Here is a 306-residue protein sequence, read N- to C-terminus: Proteasome subunit beta (306 aa).

The propeptide at 1–67 (MTWPNRDQPA…GLPTDAVPHG (67 aa)) is removed in mature form; by autocatalysis. T68 functions as the Nucleophile in the catalytic mechanism.

Belongs to the peptidase T1B family. As to quaternary structure, the 20S proteasome core is composed of 14 alpha and 14 beta subunits that assemble into four stacked heptameric rings, resulting in a barrel-shaped structure. The two inner rings, each composed of seven catalytic beta subunits, are sandwiched by two outer rings, each composed of seven alpha subunits. The catalytic chamber with the active sites is on the inside of the barrel. Has a gated structure, the ends of the cylinder being occluded by the N-termini of the alpha-subunits. Is capped by the proteasome-associated ATPase, ARC.

Its subcellular location is the cytoplasm. The enzyme catalyses Cleavage of peptide bonds with very broad specificity.. It participates in protein degradation; proteasomal Pup-dependent pathway. With respect to regulation, the formation of the proteasomal ATPase ARC-20S proteasome complex, likely via the docking of the C-termini of ARC into the intersubunit pockets in the alpha-rings, may trigger opening of the gate for substrate entry. Interconversion between the open-gate and close-gate conformations leads to a dynamic regulation of the 20S proteasome proteolysis activity. Its function is as follows. Component of the proteasome core, a large protease complex with broad specificity involved in protein degradation. The polypeptide is Proteasome subunit beta (Mycolicibacterium vanbaalenii (strain DSM 7251 / JCM 13017 / BCRC 16820 / KCTC 9966 / NRRL B-24157 / PYR-1) (Mycobacterium vanbaalenii)).